A 372-amino-acid polypeptide reads, in one-letter code: Protein RecA (372 aa).

Residue 81–88 (GPESSGKT) participates in ATP binding.

The protein belongs to the RecA family.

It is found in the cytoplasm. In terms of biological role, can catalyze the hydrolysis of ATP in the presence of single-stranded DNA, the ATP-dependent uptake of single-stranded DNA by duplex DNA, and the ATP-dependent hybridization of homologous single-stranded DNAs. It interacts with LexA causing its activation and leading to its autocatalytic cleavage. This chain is Protein RecA, found in Haemophilus ducreyi (strain 35000HP / ATCC 700724).